Consider the following 567-residue polypeptide: Cytochrome P450 monooxygenase 231 (567 aa).

The helical transmembrane segment at 3–23 threads the bilayer; that stretch reads VSTNELAILAIVLLATGVLFY. N-linked (GlcNAc...) asparagine glycans are attached at residues Asn-81 and Asn-223. Cys-475 is a binding site for heme.

The protein belongs to the cytochrome P450 family. It depends on heme as a cofactor.

It localises to the membrane. It functions in the pathway secondary metabolite biosynthesis. In terms of biological role, cytochrome P450 monooxygenase that is able to use anthracene, carbazole, pyrene, and phenanthrene as substrates for oxidation. These multifunctional properties against a series of polycyclic aromatic hydrocarbons (PAHs) suggest that CYP231 would play important roles, at least in part, in fungal metabolic systems involved in xenobiotic detoxification. This Postia placenta (strain ATCC 44394 / Madison 698-R) (Brown rot fungus) protein is Cytochrome P450 monooxygenase 231.